Consider the following 424-residue polypeptide: Histidinol dehydrogenase (424 aa).

NAD(+) is bound by residues Tyr124, Gln186, and Asn209. Ser232, Gln254, and His257 together coordinate substrate. Residues Gln254 and His257 each coordinate Zn(2+). Residues Glu322 and His323 each act as proton acceptor in the active site. The substrate site is built by His323, Asp356, Glu410, and His415. Zn(2+) is bound at residue Asp356. His415 contributes to the Zn(2+) binding site.

It belongs to the histidinol dehydrogenase family. Zn(2+) serves as cofactor.

The enzyme catalyses L-histidinol + 2 NAD(+) + H2O = L-histidine + 2 NADH + 3 H(+). The protein operates within amino-acid biosynthesis; L-histidine biosynthesis; L-histidine from 5-phospho-alpha-D-ribose 1-diphosphate: step 9/9. Its function is as follows. Catalyzes the sequential NAD-dependent oxidations of L-histidinol to L-histidinaldehyde and then to L-histidine. The protein is Histidinol dehydrogenase of Moorella thermoacetica (strain ATCC 39073 / JCM 9320).